The sequence spans 501 residues: ATP-dependent rRNA helicase RRP3 (501 aa).

Residues 3–44 are a coiled coil; sequence KIVKRKEKKANDELTSLAEKIRAKALENQKKLIEAEKEGGSE. Residues 36 to 79 form a disordered region; that stretch reads EAEKEGGSESDSEEDATAEKKKVLKSKSKSTVSTQNENTNEDES. A phosphoserine mark is found at Ser43, Ser45, and Ser47. The Q motif signature appears at 81-109; the sequence is ESFSELNLVPELIQACKNLNYSKPTPIQS. Positions 112–284 constitute a Helicase ATP-binding domain; the sequence is IPPALEGHDI…RASLTNPVKC (173 aa). 125–132 provides a ligand contact to ATP; sequence AQTGSGKT. The DEAD box motif lies at 231–234; it reads DEAD. Residues 307–461 enclose the Helicase C-terminal domain; sequence LKNTYLIYLL…NIILTLRDSV (155 aa). The disordered stretch occupies residues 480–501; that stretch reads IARGKGRRGRMMTRENMDMGER. Over residues 491–501 the composition is skewed to basic and acidic residues; it reads MTRENMDMGER.

The protein belongs to the DEAD box helicase family. DDX47/RRP3 subfamily. In terms of assembly, interacts with the SSU processome.

It localises to the nucleus. The catalysed reaction is ATP + H2O = ADP + phosphate + H(+). ATPase activity is stimulated upon the addition of RNA. Its function is as follows. ATP-dependent rRNA helicase required for pre-ribosomal RNA processing. Involved in the maturation of the 35S-pre-rRNA and to its cleavage to mature 18S rRNA. In Saccharomyces cerevisiae (strain ATCC 204508 / S288c) (Baker's yeast), this protein is ATP-dependent rRNA helicase RRP3.